Reading from the N-terminus, the 369-residue chain is Anhydro-N-acetylmuramic acid kinase (369 aa).

An ATP-binding site is contributed by 12–19; it reads GTSLDGVD.

Belongs to the anhydro-N-acetylmuramic acid kinase family.

It catalyses the reaction 1,6-anhydro-N-acetyl-beta-muramate + ATP + H2O = N-acetyl-D-muramate 6-phosphate + ADP + H(+). It functions in the pathway amino-sugar metabolism; 1,6-anhydro-N-acetylmuramate degradation. It participates in cell wall biogenesis; peptidoglycan recycling. Its function is as follows. Catalyzes the specific phosphorylation of 1,6-anhydro-N-acetylmuramic acid (anhMurNAc) with the simultaneous cleavage of the 1,6-anhydro ring, generating MurNAc-6-P. Is required for the utilization of anhMurNAc either imported from the medium or derived from its own cell wall murein, and thus plays a role in cell wall recycling. This is Anhydro-N-acetylmuramic acid kinase from Escherichia coli O139:H28 (strain E24377A / ETEC).